A 324-amino-acid polypeptide reads, in one-letter code: Phosphate transport system permease protein PstC (324 aa).

6 helical membrane passes run 29–49, 87–107, 126–146, 173–193, 235–255, and 291–311; these read LLLT…ALSM, IVTA…IAFF, LLAG…LVPV, PLGI…IPFI, VIGG…AVAF, and SALL…LVIA. In terms of domain architecture, ABC transmembrane type-1 spans 83–311; it reads IYGTIVTALI…IVTFAVLVIA (229 aa).

The protein belongs to the binding-protein-dependent transport system permease family. CysTW subfamily.

The protein resides in the cell inner membrane. Functionally, part of a binding-protein-dependent transport system for phosphate; probably responsible for the translocation of the substrate across the membrane. The sequence is that of Phosphate transport system permease protein PstC (pstC) from Xylella fastidiosa (strain 9a5c).